The primary structure comprises 146 residues: Large ribosomal subunit protein uL15 (146 aa).

A compositionally biased stretch (basic and acidic residues) spans 1–13 (MKLNELHPSEGSR). The segment at 1-56 (MKLNELHPSEGSRHARKRVGRGTSSGFGKTSGRGQKGQHARSGGNTRLGFEGGQMP) is disordered. Residues 23-35 (TSSGFGKTSGRGQ) are compositionally biased toward gly residues.

This sequence belongs to the universal ribosomal protein uL15 family. In terms of assembly, part of the 50S ribosomal subunit.

Binds to the 23S rRNA. The polypeptide is Large ribosomal subunit protein uL15 (Lactobacillus delbrueckii subsp. bulgaricus (strain ATCC 11842 / DSM 20081 / BCRC 10696 / JCM 1002 / NBRC 13953 / NCIMB 11778 / NCTC 12712 / WDCM 00102 / Lb 14)).